The chain runs to 247 residues: ATP synthase subunit a, chloroplastic (247 aa).

5 consecutive transmembrane segments (helical) span residues glutamine 38–valine 58, valine 95–leucine 115, isoleucine 134–threonine 154, leucine 199–leucine 219, and glycine 220–glycine 240.

The protein belongs to the ATPase A chain family. In terms of assembly, F-type ATPases have 2 components, CF(1) - the catalytic core - and CF(0) - the membrane proton channel. CF(1) has five subunits: alpha(3), beta(3), gamma(1), delta(1), epsilon(1). CF(0) has four main subunits: a, b, b' and c.

The protein localises to the plastid. Its subcellular location is the chloroplast thylakoid membrane. In terms of biological role, key component of the proton channel; it plays a direct role in the translocation of protons across the membrane. The polypeptide is ATP synthase subunit a, chloroplastic (Calycanthus floridus var. glaucus (Eastern sweetshrub)).